The following is a 584-amino-acid chain: DNA mismatch repair protein MutL (584 aa).

This sequence belongs to the DNA mismatch repair MutL/HexB family.

Its function is as follows. This protein is involved in the repair of mismatches in DNA. It is required for dam-dependent methyl-directed DNA mismatch repair. May act as a 'molecular matchmaker', a protein that promotes the formation of a stable complex between two or more DNA-binding proteins in an ATP-dependent manner without itself being part of a final effector complex. This Syntrophomonas wolfei subsp. wolfei (strain DSM 2245B / Goettingen) protein is DNA mismatch repair protein MutL.